We begin with the raw amino-acid sequence, 309 residues long: Protein FdhE homolog (309 aa).

This sequence belongs to the FdhE family.

The protein resides in the cytoplasm. Its function is as follows. Necessary for formate dehydrogenase activity. The polypeptide is Protein FdhE homolog (Pectobacterium atrosepticum (strain SCRI 1043 / ATCC BAA-672) (Erwinia carotovora subsp. atroseptica)).